Reading from the N-terminus, the 140-residue chain is Small ribosomal subunit protein uS12 (140 aa).

Aspartate 102 carries the post-translational modification 3-methylthioaspartic acid.

Belongs to the universal ribosomal protein uS12 family. In terms of assembly, part of the 30S ribosomal subunit. Contacts proteins S8 and S17. May interact with IF1 in the 30S initiation complex.

Its function is as follows. With S4 and S5 plays an important role in translational accuracy. In terms of biological role, interacts with and stabilizes bases of the 16S rRNA that are involved in tRNA selection in the A site and with the mRNA backbone. Located at the interface of the 30S and 50S subunits, it traverses the body of the 30S subunit contacting proteins on the other side and probably holding the rRNA structure together. The combined cluster of proteins S8, S12 and S17 appears to hold together the shoulder and platform of the 30S subunit. This chain is Small ribosomal subunit protein uS12, found in Bacillus anthracis (strain A0248).